The primary structure comprises 363 residues: Large ribosomal subunit protein uL4B (363 aa).

The tract at residues 280–363 is C-terminal-extended nuclear localization signal; sequence PENIISNADV…EKFLSVLHEN (84 aa).

The protein belongs to the universal ribosomal protein uL4 family. Component of the large ribosomal subunit (LSU). Mature yeast ribosomes consist of a small (40S) and a large (60S) subunit. The 40S small subunit contains 1 molecule of ribosomal RNA (18S rRNA) and at least 33 different proteins. The large 60S subunit contains 3 rRNA molecules (25S, 5.8S and 5S rRNA) and at least 46 different proteins. uL4 is associated with the polypeptide exit tunnel. uL4 interacts with its chaperone ACL4 and the nuclear import receptor KAP104.

The protein localises to the cytoplasm. Functionally, component of the ribosome, a large ribonucleoprotein complex responsible for the synthesis of proteins in the cell. The small ribosomal subunit (SSU) binds messenger RNAs (mRNAs) and translates the encoded message by selecting cognate aminoacyl-transfer RNA (tRNA) molecules. The large subunit (LSU) contains the ribosomal catalytic site termed the peptidyl transferase center (PTC), which catalyzes the formation of peptide bonds, thereby polymerizing the amino acids delivered by tRNAs into a polypeptide chain. The nascent polypeptides leave the ribosome through a tunnel in the LSU and interact with protein factors that function in enzymatic processing, targeting, and the membrane insertion of nascent chains at the exit of the ribosomal tunnel. The polypeptide is Large ribosomal subunit protein uL4B (rpl401) (Schizosaccharomyces pombe (strain 972 / ATCC 24843) (Fission yeast)).